The following is a 229-amino-acid chain: Cytidylate kinase (229 aa).

12 to 20 (GPSGVGKST) contributes to the ATP binding site.

Belongs to the cytidylate kinase family. Type 1 subfamily.

The protein resides in the cytoplasm. The catalysed reaction is CMP + ATP = CDP + ADP. The enzyme catalyses dCMP + ATP = dCDP + ADP. The polypeptide is Cytidylate kinase (Mesomycoplasma hyopneumoniae (strain 7448) (Mycoplasma hyopneumoniae)).